Consider the following 393-residue polypeptide: NAD(P)H-quinone oxidoreductase subunit H, chloroplastic (393 aa).

This sequence belongs to the complex I 49 kDa subunit family. In terms of assembly, NDH is composed of at least 16 different subunits, 5 of which are encoded in the nucleus.

Its subcellular location is the plastid. It is found in the chloroplast thylakoid membrane. It catalyses the reaction a plastoquinone + NADH + (n+1) H(+)(in) = a plastoquinol + NAD(+) + n H(+)(out). The enzyme catalyses a plastoquinone + NADPH + (n+1) H(+)(in) = a plastoquinol + NADP(+) + n H(+)(out). NDH shuttles electrons from NAD(P)H:plastoquinone, via FMN and iron-sulfur (Fe-S) centers, to quinones in the photosynthetic chain and possibly in a chloroplast respiratory chain. The immediate electron acceptor for the enzyme in this species is believed to be plastoquinone. Couples the redox reaction to proton translocation, and thus conserves the redox energy in a proton gradient. This is NAD(P)H-quinone oxidoreductase subunit H, chloroplastic from Ipomoea purpurea (Common morning glory).